The chain runs to 197 residues: Fucoxanthin-chlorophyll a-c binding protein C, chloroplastic (197 aa).

A chloroplast-targeting transit peptide spans 1-31; the sequence is MKTAVIASLIAGAAAFAPAKNAARTSVATNM. A run of 3 helical transmembrane segments spans residues 73-94, 113-133, and 174-196; these read ISMLAVVGYLVQEAGVRLPGTI, IPAGGLVQLLFFIGVLESSVM, and GRAAQMGILAFMVHEQLGVSLLP.

Belongs to the fucoxanthin chlorophyll protein family. The LHC complex of chromophytic algae is composed of fucoxanthin, chlorophyll A and C bound non-covalently by fucoxanthin chlorophyll proteins (FCPs). The ratio of the pigments in LHC; fucoxanthin: chlorophyll C: chlorophyll A; (0.6-1): (0.1-0.3): (1).

The protein resides in the plastid. The protein localises to the chloroplast thylakoid membrane. Functionally, the light-harvesting complex (LHC) functions as a light receptor, it captures and delivers excitation energy to photosystems with which it is closely associated. Energy is transferred from the carotenoid and chlorophyll C (or B) to chlorophyll A and the photosynthetic reaction centers where it is used to synthesize ATP and reducing power. The protein is Fucoxanthin-chlorophyll a-c binding protein C, chloroplastic (FCPC) of Phaeodactylum tricornutum (Diatom).